The following is an 808-amino-acid chain: Probable inorganic carbon transporter subunit DabA (808 aa).

Zn(2+)-binding residues include C334, D336, H494, and C509.

The protein belongs to the inorganic carbon transporter (TC 9.A.2) DabA family. In terms of assembly, forms a complex with DabB. The cofactor is Zn(2+).

It is found in the cell inner membrane. Functionally, part of an energy-coupled inorganic carbon pump. In Allorhizobium ampelinum (strain ATCC BAA-846 / DSM 112012 / S4) (Agrobacterium vitis (strain S4)), this protein is Probable inorganic carbon transporter subunit DabA.